We begin with the raw amino-acid sequence, 424 residues long: Methylenetetrahydrofolate--tRNA-(uracil-5-)-methyltransferase TrmFO 1 (424 aa).

Residue G8 to G13 participates in FAD binding.

Belongs to the MnmG family. TrmFO subfamily. It depends on FAD as a cofactor.

Its subcellular location is the cytoplasm. The catalysed reaction is uridine(54) in tRNA + (6R)-5,10-methylene-5,6,7,8-tetrahydrofolate + NADH + H(+) = 5-methyluridine(54) in tRNA + (6S)-5,6,7,8-tetrahydrofolate + NAD(+). It catalyses the reaction uridine(54) in tRNA + (6R)-5,10-methylene-5,6,7,8-tetrahydrofolate + NADPH + H(+) = 5-methyluridine(54) in tRNA + (6S)-5,6,7,8-tetrahydrofolate + NADP(+). Its function is as follows. Catalyzes the folate-dependent formation of 5-methyl-uridine at position 54 (M-5-U54) in all tRNAs. This chain is Methylenetetrahydrofolate--tRNA-(uracil-5-)-methyltransferase TrmFO 1, found in Mycoplasma mycoides subsp. mycoides SC (strain CCUG 32753 / NCTC 10114 / PG1).